The following is a 184-amino-acid chain: Adenine phosphoribosyltransferase (184 aa).

This sequence belongs to the purine/pyrimidine phosphoribosyltransferase family. As to quaternary structure, homodimer.

It is found in the cytoplasm. The enzyme catalyses AMP + diphosphate = 5-phospho-alpha-D-ribose 1-diphosphate + adenine. The protein operates within purine metabolism; AMP biosynthesis via salvage pathway; AMP from adenine: step 1/1. Its function is as follows. Catalyzes a salvage reaction resulting in the formation of AMP, that is energically less costly than de novo synthesis. The sequence is that of Adenine phosphoribosyltransferase from Shewanella putrefaciens (strain CN-32 / ATCC BAA-453).